Reading from the N-terminus, the 670-residue chain is Acetyl-coenzyme A synthetase (670 aa).

Residues 211-214 and Thr329 each bind CoA; that span reads RGGK. Residues 404–406, 428–433, Asp519, and Arg534 contribute to the ATP site; these read GEP and DTYWQT. Ser542 contacts CoA. Position 545 (Arg545) interacts with ATP. Arg603 serves as a coordination point for CoA.

It belongs to the ATP-dependent AMP-binding enzyme family.

The catalysed reaction is acetate + ATP + CoA = acetyl-CoA + AMP + diphosphate. The protein is Acetyl-coenzyme A synthetase (facA) of Emericella nidulans (strain FGSC A4 / ATCC 38163 / CBS 112.46 / NRRL 194 / M139) (Aspergillus nidulans).